The sequence spans 122 residues: Large ribosomal subunit protein uL14 (122 aa).

This sequence belongs to the universal ribosomal protein uL14 family. Part of the 50S ribosomal subunit. Forms a cluster with proteins L3 and L19. In the 70S ribosome, L14 and L19 interact and together make contacts with the 16S rRNA in bridges B5 and B8.

In terms of biological role, binds to 23S rRNA. Forms part of two intersubunit bridges in the 70S ribosome. The chain is Large ribosomal subunit protein uL14 from Beutenbergia cavernae (strain ATCC BAA-8 / DSM 12333 / CCUG 43141 / JCM 11478 / NBRC 16432 / NCIMB 13614 / HKI 0122).